The primary structure comprises 85 residues: Transcriptional repressor protein KorC (85 aa).

A DNA-binding region (H-T-H motif) is located at residues 28–47 (EVLRLAGLTGGKAAKVLGLG).

In terms of biological role, acts with KorA as corepressor in the control of the kilC and kilE operons. This chain is Transcriptional repressor protein KorC (korC), found in Escherichia coli.